The primary structure comprises 461 residues: Cysteine--tRNA ligase (461 aa).

Cys28 contributes to the Zn(2+) binding site. The 'HIGH' region motif lies at 30–40 (ITVYDLCHIGH). Zn(2+) contacts are provided by Cys209, His234, and Glu238. The 'KMSKS' region signature appears at 266–270 (KMSKS). Lys269 lines the ATP pocket.

The protein belongs to the class-I aminoacyl-tRNA synthetase family. As to quaternary structure, monomer. Zn(2+) serves as cofactor.

It is found in the cytoplasm. It catalyses the reaction tRNA(Cys) + L-cysteine + ATP = L-cysteinyl-tRNA(Cys) + AMP + diphosphate. The protein is Cysteine--tRNA ligase of Escherichia coli O6:K15:H31 (strain 536 / UPEC).